Consider the following 417-residue polypeptide: Gamma-glutamyl phosphate reductase (417 aa).

The protein belongs to the gamma-glutamyl phosphate reductase family.

The protein resides in the cytoplasm. The enzyme catalyses L-glutamate 5-semialdehyde + phosphate + NADP(+) = L-glutamyl 5-phosphate + NADPH + H(+). It participates in amino-acid biosynthesis; L-proline biosynthesis; L-glutamate 5-semialdehyde from L-glutamate: step 2/2. Its function is as follows. Catalyzes the NADPH-dependent reduction of L-glutamate 5-phosphate into L-glutamate 5-semialdehyde and phosphate. The product spontaneously undergoes cyclization to form 1-pyrroline-5-carboxylate. This Escherichia fergusonii (strain ATCC 35469 / DSM 13698 / CCUG 18766 / IAM 14443 / JCM 21226 / LMG 7866 / NBRC 102419 / NCTC 12128 / CDC 0568-73) protein is Gamma-glutamyl phosphate reductase.